A 172-amino-acid chain; its full sequence is MRTLVMVACAVSLAACSSPPKPPTVSGRHRIPINSPAAQEELRLQVFPQEPTAQATMWPARPPKQTVNVYFPQDVTVFRPTSAQINQLHTLLWPVPKHINVRGLTDNNCPPPGDTQVARVRALAIYNWLINQGVPASRITISYAPVKDYASNAPLSPGRVLNRRVDIEILRK.

An N-terminal signal peptide occupies residues 1–15 (MRTLVMVACAVSLAA). Cys-16 carries the N-palmitoyl cysteine lipid modification. The S-diacylglycerol cysteine moiety is linked to residue Cys-16. Residues 58 to 172 (WPARPPKQTV…RRVDIEILRK (115 aa)) enclose the OmpA-like domain.

The protein localises to the cell outer membrane. Its function is as follows. The virB operon is essential for intracellular survival and is not involved in the invasion process. Constitutes a major determinant of virulence in mice. This protein is essential for pathogenesis in mice but is not required for intracellular survival. The chain is Type IV secretion system putative outer membrane lipoprotein BAB2_0057 from Brucella abortus (strain 2308).